A 121-amino-acid chain; its full sequence is Basic phospholipase A2 homolog (121 aa).

7 disulfide bridges follow: C26–C115, C28–C44, C43–C95, C49–C121, C50–C88, C57–C81, and C75–C86.

Belongs to the phospholipase A2 family. Group II subfamily. K49 sub-subfamily. As to quaternary structure, homodimer. As to expression, expressed by the venom gland.

Its subcellular location is the secreted. In terms of biological role, snake venom phospholipase A2 homolog that lacks enzymatic activity, but has myotoxic and cytolytic activities. The sequence is that of Basic phospholipase A2 homolog from Metlapilcoatlus nummifer (Mexican jumping pitviper).